Reading from the N-terminus, the 127-residue chain is Aspartate 1-decarboxylase (127 aa).

Ser-25 functions as the Schiff-base intermediate with substrate; via pyruvic acid in the catalytic mechanism. Ser-25 bears the Pyruvic acid (Ser) mark. Thr-57 serves as a coordination point for substrate. Tyr-58 serves as the catalytic Proton donor. 73 to 75 is a binding site for substrate; it reads GAA.

Belongs to the PanD family. In terms of assembly, heterooctamer of four alpha and four beta subunits. Pyruvate serves as cofactor. Is synthesized initially as an inactive proenzyme, which is activated by self-cleavage at a specific serine bond to produce a beta-subunit with a hydroxyl group at its C-terminus and an alpha-subunit with a pyruvoyl group at its N-terminus.

It localises to the cytoplasm. It carries out the reaction L-aspartate + H(+) = beta-alanine + CO2. It participates in cofactor biosynthesis; (R)-pantothenate biosynthesis; beta-alanine from L-aspartate: step 1/1. Functionally, catalyzes the pyruvoyl-dependent decarboxylation of aspartate to produce beta-alanine. The polypeptide is Aspartate 1-decarboxylase (Trichormus variabilis (strain ATCC 29413 / PCC 7937) (Anabaena variabilis)).